The sequence spans 222 residues: Large ribosomal subunit protein mL64 (222 aa).

2 disordered regions span residues 21-47 and 186-222; these read RSRS…NLLT and QRKR…EPSS. Positions 98 to 207 form a coiled coil; sequence TMQESLRLQQ…KKEARIAAMA (110 aa). A Nuclear localization signal motif is present at residues 184 to 200; the sequence is KQQRKRLKEERQRQKKE. The span at 186 to 202 shows a compositional bias: basic and acidic residues; it reads QRKRLKEERQRQKKEAR. Residues 203–215 are compositionally biased toward low complexity; it reads IAAMASAEAQDSA.

Belongs to the mitochondrion-specific ribosomal protein mL64 family. As to quaternary structure, component of the mitochondrial ribosome large subunit (39S) which comprises a 16S rRNA and about 50 distinct proteins. Interacts with GADD45A, GADD45B and GADD45G. Interacts with NR4A1 via the NR4A1 AB domain. Interacts with ATAD3A and ATAD3B.

It is found in the mitochondrion. The protein localises to the nucleus. Acts as a negative regulator of G1 to S cell cycle phase progression by inhibiting cyclin-dependent kinases. Inhibitory effects are additive with GADD45 proteins but also occur in the absence of GADD45 proteins. Acts as a repressor of the orphan nuclear receptor NR4A1 by inhibiting AB domain-mediated transcriptional activity. May be involved in the hormone-mediated regulation of NR4A1 transcriptional activity. May play a role in mitochondrial protein synthesis. This Mus musculus (Mouse) protein is Large ribosomal subunit protein mL64 (Gadd45gip1).